The chain runs to 254 residues: 3-deoxy-manno-octulosonate cytidylyltransferase (254 aa).

The protein belongs to the KdsB family.

It localises to the cytoplasm. It catalyses the reaction 3-deoxy-alpha-D-manno-oct-2-ulosonate + CTP = CMP-3-deoxy-beta-D-manno-octulosonate + diphosphate. It functions in the pathway nucleotide-sugar biosynthesis; CMP-3-deoxy-D-manno-octulosonate biosynthesis; CMP-3-deoxy-D-manno-octulosonate from 3-deoxy-D-manno-octulosonate and CTP: step 1/1. It participates in bacterial outer membrane biogenesis; lipopolysaccharide biosynthesis. Functionally, activates KDO (a required 8-carbon sugar) for incorporation into bacterial lipopolysaccharide in Gram-negative bacteria. In Pseudomonas aeruginosa (strain ATCC 15692 / DSM 22644 / CIP 104116 / JCM 14847 / LMG 12228 / 1C / PRS 101 / PAO1), this protein is 3-deoxy-manno-octulosonate cytidylyltransferase.